Reading from the N-terminus, the 901-residue chain is Desmocollin-2 (901 aa).

Positions 1–27 (MEAARPSGSWNGALCRLLLLTLAILIF) are cleaved as a signal peptide. The propeptide occupies 28–135 (ASDACKNVTL…KEKVLRRAKR (108 aa)). N-linked (GlcNAc...) asparagine glycans are attached at residues N34 and N166. Cadherin domains follow at residues 136–243 (RWAP…YPIF), 244–355 (TEET…LPTF), 356–471 (TRTS…GPEC), 472–579 (NPPI…FIPK), and 580–694 (KTVI…QLGK). The Extracellular segment spans residues 136-694 (RWAPIPCSML…IGGGGVQLGK (559 aa)). N392 carries an N-linked (GlcNAc...) (complex) asparagine glycan. Residues N546 and N629 are each glycosylated (N-linked (GlcNAc...) asparagine). Residues 695 to 715 (WAILAILLGIALLFCILFTLV) form a helical membrane-spanning segment. The Cytoplasmic segment spans residues 716–901 (CGASGTSKQP…RTLAEACMKR (186 aa)). Residues S864, S868, and S873 each carry the phosphoserine modification.

Interacts with DSP, PKP2 and JUP. Interacts with DSG3; the interaction may limit the interaction of DSC3 with p38MAPK family members and therefore repress p38MAPK signaling activation. Expressed at intercalated disks in the heart, where it is colocalized with CDH2 (at protein level). Expressed in intestinal mucosal cells (at protein level).

It localises to the cell membrane. Its subcellular location is the cell junction. The protein localises to the desmosome. In terms of biological role, a component of desmosome cell-cell junctions which are required for positive regulation of cellular adhesion. Promotes timely incorporation of DSG2 into desmosome intercellular junctions and promotes interaction of desmosome cell junctions with intermediate filament cytokeratin, via modulation of DSP phosphorylation. Plays an important role in desmosome-mediated maintenance of intestinal epithelial cell intercellular adhesion strength and barrier function. Positively regulates wound healing of intestinal mucosa via promotion of epithelial cell migration, and also plays a role in mechanotransduction of force between intestinal epithelial cells and extracellular matrix. May contribute to epidermal cell positioning (stratification) by mediating differential adhesiveness between cells that express different isoforms. May promote p38MAPK signaling activation that facilitates keratinocyte migration. The sequence is that of Desmocollin-2 from Homo sapiens (Human).